The sequence spans 324 residues: Adenine deaminase (324 aa).

3 residues coordinate Zn(2+): histidine 11, histidine 13, and histidine 189. The Proton donor role is filled by glutamate 192. Residue aspartate 270 participates in Zn(2+) binding. Aspartate 271 is a substrate binding site.

Belongs to the metallo-dependent hydrolases superfamily. Adenosine and AMP deaminases family. Adenine deaminase type 2 subfamily. Zn(2+) is required as a cofactor.

It catalyses the reaction adenine + H2O + H(+) = hypoxanthine + NH4(+). Functionally, catalyzes the hydrolytic deamination of adenine to hypoxanthine. Plays an important role in the purine salvage pathway and in nitrogen catabolism. This Sinorhizobium fredii (strain NBRC 101917 / NGR234) protein is Adenine deaminase.